A 766-amino-acid chain; its full sequence is MAALSGGGGGGAEPGQALFNGDMEPEAGAGAGAAASSAADPAIPEEVWNIKQMIKLTQEHIEALLDKFGGEHNPPSIYLEAYEEYTSKLDALQQREQQLLESLGNGTDFSVSSSASMDTVTSSSSSSLSVLPSSLSVFQNPTDVARSNPKSPQKPIVRVFLPNKQRTVVPARCGVTVRDSLKKALMMRGLIPECCAVYRIQDGEKKPIGWDTDISWLTGEELHVEVLENVPLTTHNFVRKTFFTLAFCDFCRKLLFQGFRCQTCGYKFHQRCSTEVPLMCVNYDQLDLLFVSKFFEHHPIPQEEASLAETALTSGSSPSAPASDSIGPQILTSPSPSKSIPIPQPFRPADEDHRNQFGQRDRSSSAPNVHINTIEPVNIDDLIRDQGFRGDGGSTTGLSATPPASLPGSLTNVKALQKSPGPQRERKSSSSSEDRNRMKTLGRRDSSDDWEIPDGQITVGQRIGSGSFGTVYKGKWHGDVAVKMLNVTAPTPQQLQAFKNEVGVLRKTRHVNILLFMGYSTKPQLAIVTQWCEGSSLYHHLHIIETKFEMIKLIDIARQTAQGMDYLHAKSIIHRDLKSNNIFLHEDLTVKIGDFGLATVKSRWSGSHQFEQLSGSILWMAPEVIRMQDKNPYSFQSDVYAFGIVLYELMTGQLPYSNINNRDQIIFMVGRGYLSPDLSKVRSNCPKAMKRLMAECLKKKRDERPLFPQILASIELLARSLPKIHRSASEPSLNRAGFQTEDFSLYACASPKTPIQAGGYGAFPVH.

Residues 1-13 are compositionally biased toward gly residues; it reads MAALSGGGGGGAE. Residues 1-38 are disordered; that stretch reads MAALSGGGGGGAEPGQALFNGDMEPEAGAGAGAAASSA. Residue Ala2 is modified to N-acetylalanine. At Ser151 the chain carries Phosphoserine. The RBD domain occupies 155–227; it reads PIVRVFLPNK…TGEELHVEVL (73 aa). The Phorbol-ester/DAG-type zinc-finger motif lies at 234–280; that stretch reads THNFVRKTFFTLAFCDFCRKLLFQGFRCQTCGYKFHQRCSTEVPLMC. His235, Cys248, Cys251, Cys261, Cys264, His269, Cys272, and Cys280 together coordinate Zn(2+). Residues 308 to 454 are disordered; the sequence is AETALTSGSS…DSSDDWEIPD (147 aa). Positions 314-341 are enriched in low complexity; it reads SGSSPSAPASDSIGPQILTSPSPSKSIP. Ser333 is modified (phosphoserine). The span at 348 to 363 shows a compositional bias: basic and acidic residues; sequence PADEDHRNQFGQRDRS. Ser365 is subject to Phosphoserine; by SGK1. Thr373 is modified (phosphothreonine; by autocatalysis). The residue at position 396 (Thr396) is a Phosphothreonine. Ser399 is subject to Phosphoserine. Residue Thr401 is modified to Phosphothreonine. Positions 423–447 are enriched in basic and acidic residues; the sequence is QRERKSSSSSEDRNRMKTLGRRDSS. Residues Ser446 and Ser447 each carry the phosphoserine modification. The region spanning 457–717 is the Protein kinase domain; it reads ITVGQRIGSG…PQILASIELL (261 aa). ATP contacts are provided by residues 463-471 and Lys483; that span reads IGSGSFGTV. Catalysis depends on Asp576, which acts as the Proton acceptor. A Glycyl lysine isopeptide (Lys-Gly) (interchain with G-Cter in ubiquitin) cross-link involves residue Lys578. Omega-N-methylarginine; by PRMT5 is present on Arg671. A phosphoserine mark is found at Ser729 and Ser750. Thr753 bears the Phosphothreonine; by MAPK1 mark.

Belongs to the protein kinase superfamily. TKL Ser/Thr protein kinase family. RAF subfamily. Monomer. Homodimer. Heterodimerizes with RAF1, and the heterodimer possesses a highly increased kinase activity compared to the respective homodimers or monomers. Heterodimerization is mitogen-regulated and enhanced by 14-3-3 proteins. MAPK1/ERK2 activation can induce a negative feedback that promotes the dissociation of the heterodimer by phosphorylating BRAF at Thr-753. Heterodimerizes (via N-terminus) with KSR1 (via N-terminus) or KSR2 (via N-terminus) in a MAP2K1-dependent manner. Interacts with MAP2K1 and MAP2K2. Found in a complex with at least BRAF, HRAS, MAP2K1, MAPK3 and RGS14. Interacts with RIT1. Interacts (via N-terminus) with RGS14 (via RBD domains); the interaction mediates the formation of a ternary complex with RAF1, a ternary complex inhibited by GNAI1. Interacts with DGKH. Interacts with PRMT5. Interacts with KSR2. Interacts with AKAP13, MAP2K1 and KSR1. Identified in a complex with AKAP13, MAP2K1 and KSR1. Interacts with FNIP1 and FNIP2. The cofactor is Zn(2+). Post-translationally, phosphorylation at Ser-365 by SGK1 inhibits its activity. Phosphorylation at Thr-753 by MAPK1. Dephosphorylation of Ser-365 by the SHOC2-MRAS-PP1c (SMP) complex consisting of SHOC2, GTP-bound M-Ras/MRAS and the catalytic subunit of protein phosphatase 1 (PPP1CA, PPP1CB or PPP1CC); this relieves inactivation and stimulates kinase activity. In terms of processing, methylation at Arg-671 decreases stability and kinase activity. Ubiquitinated by RNF149; which leads to proteasomal degradation. Polyubiquitinated at Lys-578 in response to EGF. In terms of tissue distribution, brain and testis.

The protein localises to the nucleus. It is found in the cytoplasm. Its subcellular location is the cell membrane. The catalysed reaction is L-seryl-[protein] + ATP = O-phospho-L-seryl-[protein] + ADP + H(+). It catalyses the reaction L-threonyl-[protein] + ATP = O-phospho-L-threonyl-[protein] + ADP + H(+). In quiescent cells, maintained in an inactive state via an intramolecular interaction between the protein kinase and N-terminal domains. Following mitogen-mediated cell activation, binds via its RGB domain to active HRAS (GTP-bound) which releases the inhibitory intramolecular interaction between the two domains. This allows the MAP2K1-mediated dimerization of KSR1 or KSR2, and BRAF which activates BRAF. Protein kinase involved in the transduction of mitogenic signals from the cell membrane to the nucleus. Phosphorylates MAP2K1, and thereby activates the MAP kinase signal transduction pathway. Phosphorylates PFKFB2. May play a role in the postsynaptic responses of hippocampal neurons. The sequence is that of Serine/threonine-protein kinase B-raf from Homo sapiens (Human).